The sequence spans 357 residues: Peptide chain release factor 1 (357 aa).

An N5-methylglutamine modification is found at glutamine 233.

This sequence belongs to the prokaryotic/mitochondrial release factor family. In terms of processing, methylated by PrmC. Methylation increases the termination efficiency of RF1.

It is found in the cytoplasm. Peptide chain release factor 1 directs the termination of translation in response to the peptide chain termination codons UAG and UAA. This is Peptide chain release factor 1 from Leuconostoc citreum (strain KM20).